Consider the following 467-residue polypeptide: Dihydrolipoyl dehydrogenase (467 aa).

FAD is bound by residues Glu33 to Cys41, Lys50, and Gly113. Cys41 and Cys46 are oxidised to a cystine. NAD(+)-binding positions include Gly181 to Ile185, Glu204, and Ala269 to Phe272. Residues Asp312 and Ala320 each coordinate FAD. The Proton acceptor role is filled by His446.

This sequence belongs to the class-I pyridine nucleotide-disulfide oxidoreductase family. In terms of assembly, homodimer. Part of the PDH complex, consisting of multiple copies of AceE (E1), DlaT (E2) and Lpd (E3), and of the BCKADH complex, consisting of multiple copies of BkdA/BkdB (E1), BkdC (E2) and Lpd (E3). FAD is required as a cofactor.

It is found in the cytoplasm. The catalysed reaction is N(6)-[(R)-dihydrolipoyl]-L-lysyl-[protein] + NAD(+) = N(6)-[(R)-lipoyl]-L-lysyl-[protein] + NADH + H(+). Lipoamide dehydrogenase is a component of the alpha-ketoacid dehydrogenase complexes. Catalyzes the reoxidation of dihydrolipoyl groups which are covalently attached to the lipoate acyltransferase components (E2) of the complexes. In Mycobacterium leprae (strain TN), this protein is Dihydrolipoyl dehydrogenase (lpd).